We begin with the raw amino-acid sequence, 270 residues long: Undecaprenyl-diphosphatase (270 aa).

Transmembrane regions (helical) follow at residues 1-21 (MTWW…FIPV), 92-112 (FRLG…YVLF), 119-139 (AFGS…LLLL), 150-170 (LSGV…VPGI), 193-213 (FSFL…GLEL), 223-243 (LSLG…IYVV), and 250-270 (GNLQ…LWLL).

It belongs to the UppP family.

The protein localises to the cell inner membrane. The enzyme catalyses di-trans,octa-cis-undecaprenyl diphosphate + H2O = di-trans,octa-cis-undecaprenyl phosphate + phosphate + H(+). Its function is as follows. Catalyzes the dephosphorylation of undecaprenyl diphosphate (UPP). Confers resistance to bacitracin. The sequence is that of Undecaprenyl-diphosphatase from Salinibacter ruber (strain DSM 13855 / M31).